The primary structure comprises 182 residues: Shikimate kinase (182 aa).

14-19 contributes to the ATP binding site; the sequence is GAGKTT. Thr-18 contacts Mg(2+). Residues Asp-36, Arg-60, and Gly-84 each coordinate substrate. Residue Arg-122 participates in ATP binding. Position 141 (Arg-141) interacts with substrate.

The protein belongs to the shikimate kinase family. Monomer. Requires Mg(2+) as cofactor.

It localises to the cytoplasm. It catalyses the reaction shikimate + ATP = 3-phosphoshikimate + ADP + H(+). Its pathway is metabolic intermediate biosynthesis; chorismate biosynthesis; chorismate from D-erythrose 4-phosphate and phosphoenolpyruvate: step 5/7. Catalyzes the specific phosphorylation of the 3-hydroxyl group of shikimic acid using ATP as a cosubstrate. The polypeptide is Shikimate kinase (Marinomonas sp. (strain MWYL1)).